Reading from the N-terminus, the 342-residue chain is Alternative oxidase, mitochondrial (342 aa).

Residues Met1–Phe20 constitute a mitochondrion transit peptide. A helical transmembrane segment spans residues Leu135–Ile155. The Fe cation site is built by Glu142, Glu181, and His184. A helical transmembrane segment spans residues Phe200–Lys220. Positions 232, 287, and 290 each coordinate Fe cation. 2 stretches are compositionally biased toward basic and acidic residues: residues Pro308–Gln321 and Pro330–Leu342. The interval Pro308 to Leu342 is disordered.

The protein belongs to the alternative oxidase family. In terms of assembly, homodimer; disulfide-linked. Requires Fe cation as cofactor.

Its subcellular location is the mitochondrion inner membrane. Its function is as follows. Catalyzes cyanide-resistant oxygen consumption. May increase respiration when the cytochrome respiratory pathway is restricted, or in response to low temperatures. The chain is Alternative oxidase, mitochondrial (AOX1) from Wickerhamomyces anomalus (Yeast).